Consider the following 344-residue polypeptide: Angiopoietin-related protein 7 (344 aa).

An N-terminal signal peptide occupies residues 1–26 (MLKKTLSAVAWLCIFLVAFVSHPVWP). The stretch at 37 to 116 (ELTAATCCEE…IGIMQLQAAQ (80 aa)) forms a coiled coil. The N-linked (GlcNAc...) asparagine glycan is linked to asparagine 56. The Fibrinogen C-terminal domain maps to 120–341 (QTSADAIYDC…RVEMKIRPED (222 aa)). A disulfide bridge connects residues cysteine 129 and cysteine 160. N-linked (GlcNAc...) asparagine glycans are attached at residues asparagine 251 and asparagine 265. Cysteine 283 and cysteine 296 form a disulfide bridge.

Homotetramer; disulfide-linked.

The protein localises to the secreted. Functionally, has a role in the formation and organization of the extracellular matrix. In the eye, it functions as a mediator of dexamethasone-induced matrix deposition in the trabecular meshwork, the tissue responsible for the outflow of the ocular aqueous humor and for the maintenance of intraocular pressure. Is a negative regulator of angiogenesis in the cornea, and plays a major role in maintaining corneal avascularity and transparency. This Bos taurus (Bovine) protein is Angiopoietin-related protein 7 (ANGPTL7).